We begin with the raw amino-acid sequence, 337 residues long: Anthranilate phosphoribosyltransferase (337 aa).

5-phospho-alpha-D-ribose 1-diphosphate contacts are provided by residues G81, 84–85, S89, 91–94, 109–117, and A121; these read GD, NVST, and KHGNRALSS. An anthranilate-binding site is contributed by G81. S93 serves as a coordination point for Mg(2+). N112 lines the anthranilate pocket. R167 contacts anthranilate. Mg(2+) contacts are provided by D226 and E227.

Belongs to the anthranilate phosphoribosyltransferase family. As to quaternary structure, homodimer. Mg(2+) is required as a cofactor.

The enzyme catalyses N-(5-phospho-beta-D-ribosyl)anthranilate + diphosphate = 5-phospho-alpha-D-ribose 1-diphosphate + anthranilate. It participates in amino-acid biosynthesis; L-tryptophan biosynthesis; L-tryptophan from chorismate: step 2/5. Its function is as follows. Catalyzes the transfer of the phosphoribosyl group of 5-phosphorylribose-1-pyrophosphate (PRPP) to anthranilate to yield N-(5'-phosphoribosyl)-anthranilate (PRA). In Bradyrhizobium diazoefficiens (strain JCM 10833 / BCRC 13528 / IAM 13628 / NBRC 14792 / USDA 110), this protein is Anthranilate phosphoribosyltransferase.